The sequence spans 314 residues: Tetraacyldisaccharide 4'-kinase (314 aa).

54–61 (YIGGTGKT) serves as a coordination point for ATP.

This sequence belongs to the LpxK family.

The enzyme catalyses a lipid A disaccharide + ATP = a lipid IVA + ADP + H(+). Its pathway is glycolipid biosynthesis; lipid IV(A) biosynthesis; lipid IV(A) from (3R)-3-hydroxytetradecanoyl-[acyl-carrier-protein] and UDP-N-acetyl-alpha-D-glucosamine: step 6/6. Transfers the gamma-phosphate of ATP to the 4'-position of a tetraacyldisaccharide 1-phosphate intermediate (termed DS-1-P) to form tetraacyldisaccharide 1,4'-bis-phosphate (lipid IVA). This is Tetraacyldisaccharide 4'-kinase from Pelagibacter ubique (strain HTCC1062).